The chain runs to 225 residues: Uridylate kinase (225 aa).

Gly9–Ser10 lines the ATP pocket. A UMP-binding site is contributed by Gly44. Positions 45 and 49 each coordinate ATP. UMP-binding positions include Asp66 and Thr114–Thr120. Thr140, Asn141, Tyr146, and Asp149 together coordinate ATP.

This sequence belongs to the UMP kinase family. As to quaternary structure, homohexamer.

Its subcellular location is the cytoplasm. The enzyme catalyses UMP + ATP = UDP + ADP. The protein operates within pyrimidine metabolism; CTP biosynthesis via de novo pathway; UDP from UMP (UMPK route): step 1/1. Its activity is regulated as follows. Inhibited by UTP. Functionally, catalyzes the reversible phosphorylation of UMP to UDP. In Thermococcus onnurineus (strain NA1), this protein is Uridylate kinase.